We begin with the raw amino-acid sequence, 142 residues long: Large ribosomal subunit protein uL13 (142 aa).

It belongs to the universal ribosomal protein uL13 family. Part of the 50S ribosomal subunit.

In terms of biological role, this protein is one of the early assembly proteins of the 50S ribosomal subunit, although it is not seen to bind rRNA by itself. It is important during the early stages of 50S assembly. This chain is Large ribosomal subunit protein uL13, found in Vibrio campbellii (strain ATCC BAA-1116).